We begin with the raw amino-acid sequence, 650 residues long: Acetyl-coenzyme A synthetase (650 aa).

CoA is bound by residues 191–194 (RAGR), Thr311, and Asn335. Residues 387–389 (GEP), 411–416 (DTWWQT), Asp500, and Arg515 contribute to the ATP site. Ser523 is a CoA binding site. ATP is bound at residue Arg526. Mg(2+) contacts are provided by Val537, His539, and Val542. A CoA-binding site is contributed by Arg584. An N6-acetyllysine modification is found at Lys609.

The protein belongs to the ATP-dependent AMP-binding enzyme family. The cofactor is Mg(2+). Acetylated. Deacetylation by the SIR2-homolog deacetylase activates the enzyme.

It catalyses the reaction acetate + ATP + CoA = acetyl-CoA + AMP + diphosphate. Its function is as follows. Catalyzes the conversion of acetate into acetyl-CoA (AcCoA), an essential intermediate at the junction of anabolic and catabolic pathways. AcsA undergoes a two-step reaction. In the first half reaction, AcsA combines acetate with ATP to form acetyl-adenylate (AcAMP) intermediate. In the second half reaction, it can then transfer the acetyl group from AcAMP to the sulfhydryl group of CoA, forming the product AcCoA. The chain is Acetyl-coenzyme A synthetase from Shewanella pealeana (strain ATCC 700345 / ANG-SQ1).